A 160-amino-acid chain; its full sequence is Transcription elongation factor GreA (160 aa).

Positions 1 to 72 form a coiled coil; that stretch reads MAEKTYPMTL…QISSLETKIR (72 aa).

The protein belongs to the GreA/GreB family.

Functionally, necessary for efficient RNA polymerase transcription elongation past template-encoded arresting sites. The arresting sites in DNA have the property of trapping a certain fraction of elongating RNA polymerases that pass through, resulting in locked ternary complexes. Cleavage of the nascent transcript by cleavage factors such as GreA or GreB allows the resumption of elongation from the new 3'terminus. GreA releases sequences of 2 to 3 nucleotides. This Streptococcus pneumoniae (strain ATCC 700669 / Spain 23F-1) protein is Transcription elongation factor GreA.